The following is a 598-amino-acid chain: UvrABC system protein C (598 aa).

In terms of domain architecture, GIY-YIG spans Thr13 to Ile91. In terms of domain architecture, UVR spans Thr200 to Val235.

It belongs to the UvrC family. Interacts with UvrB in an incision complex.

It localises to the cytoplasm. Functionally, the UvrABC repair system catalyzes the recognition and processing of DNA lesions. UvrC both incises the 5' and 3' sides of the lesion. The N-terminal half is responsible for the 3' incision and the C-terminal half is responsible for the 5' incision. This Thiobacillus denitrificans (strain ATCC 25259 / T1) protein is UvrABC system protein C.